The primary structure comprises 414 residues: Multifunctional CCA protein (414 aa).

2 residues coordinate ATP: glycine 8 and arginine 11. Glycine 8 and arginine 11 together coordinate CTP. The Mg(2+) site is built by aspartate 21 and aspartate 23. The ATP site is built by arginine 91, arginine 137, and arginine 140. The CTP site is built by arginine 91, arginine 137, and arginine 140. The 102-residue stretch at 228–329 (TGIHTLMTLA…LKLFDAVDVW (102 aa)) folds into the HD domain.

Belongs to the tRNA nucleotidyltransferase/poly(A) polymerase family. Bacterial CCA-adding enzyme type 1 subfamily. As to quaternary structure, monomer. Can also form homodimers and oligomers. The cofactor is Mg(2+). Requires Ni(2+) as cofactor.

It carries out the reaction a tRNA precursor + 2 CTP + ATP = a tRNA with a 3' CCA end + 3 diphosphate. The catalysed reaction is a tRNA with a 3' CCA end + 2 CTP + ATP = a tRNA with a 3' CCACCA end + 3 diphosphate. In terms of biological role, catalyzes the addition and repair of the essential 3'-terminal CCA sequence in tRNAs without using a nucleic acid template. Adds these three nucleotides in the order of C, C, and A to the tRNA nucleotide-73, using CTP and ATP as substrates and producing inorganic pyrophosphate. tRNA 3'-terminal CCA addition is required both for tRNA processing and repair. Also involved in tRNA surveillance by mediating tandem CCA addition to generate a CCACCA at the 3' terminus of unstable tRNAs. While stable tRNAs receive only 3'-terminal CCA, unstable tRNAs are marked with CCACCA and rapidly degraded. The chain is Multifunctional CCA protein from Serratia proteamaculans (strain 568).